The primary structure comprises 112 residues: Putative pterin-4-alpha-carbinolamine dehydratase (112 aa).

Belongs to the pterin-4-alpha-carbinolamine dehydratase family.

The catalysed reaction is (4aS,6R)-4a-hydroxy-L-erythro-5,6,7,8-tetrahydrobiopterin = (6R)-L-erythro-6,7-dihydrobiopterin + H2O. This Vibrio campbellii (strain ATCC BAA-1116) protein is Putative pterin-4-alpha-carbinolamine dehydratase.